Consider the following 22-residue polypeptide: Mu-conotoxin GIIIB (22 aa).

3 disulfide bridges follow: cysteine 3–cysteine 15, cysteine 4–cysteine 20, and cysteine 10–cysteine 21. Residues proline 6 and proline 7 each carry the 4-hydroxyproline; partial modification. Proline 17 bears the 4-hydroxyproline mark. Alanine 22 is subject to Alanine amide.

This sequence belongs to the conotoxin M superfamily. As to expression, expressed by the venom duct.

It is found in the secreted. Functionally, mu-conotoxins block voltage-gated sodium channels (Nav). This is Mu-conotoxin GIIIB from Conus geographus (Geography cone).